We begin with the raw amino-acid sequence, 398 residues long: MSIEDVGIKPSEEYDDYIMYLKKRIRQLELQVRTLEADKERLERELSRLRMEMSRLRQPPAFAGTLIELLDEDRAIVQNYNGPRFVVRIAPWIERENLKPGARVALDQRTMAIVELLPSEKDPSVLGFEVIERPTVSYNDIGGLDKQLQELREAIELPLKHPELFEKVGIEPPKGVLLYGPPGCGKTLMAKALAHEVNATFIRVVGSELVRKFIGEGARLVHELFELAKEKAPAIIFIDEIDAIGAKRMDETTGGEREVNRTLMQLLAEMDGFDPSGNVKIIAATNRPDILDPALLRPGRFDRLIEVPLPNFKSRLEILKIHTKRMNLKGVDLRIIAEMTEGASGADLKAITMEAGMFAIRDRREYVTQEDFLKAIEKVLGSEQRLSQQIAMHEVMYG.

Positions 18–59 form a coiled coil; the sequence is IMYLKKRIRQLELQVRTLEADKERLERELSRLRMEMSRLRQP. ATP-binding positions include 183–188 and histidine 322; that span reads GCGKTL. The tract at residues 396–398 is docks into pockets in the proteasome alpha-ring to cause gate opening; sequence MYG.

It belongs to the AAA ATPase family. Homohexamer. The hexameric complex has a two-ring architecture resembling a top hat that caps the 20S proteasome core at one or both ends. Upon ATP-binding, the C-terminus of PAN interacts with the alpha-rings of the proteasome core by binding to the intersubunit pockets.

It is found in the cytoplasm. In terms of biological role, ATPase which is responsible for recognizing, binding, unfolding and translocation of substrate proteins into the archaeal 20S proteasome core particle. Is essential for opening the gate of the 20S proteasome via an interaction with its C-terminus, thereby allowing substrate entry and access to the site of proteolysis. Thus, the C-termini of the proteasomal ATPase function like a 'key in a lock' to induce gate opening and therefore regulate proteolysis. Unfolding activity requires energy from ATP hydrolysis, whereas ATP binding alone promotes ATPase-20S proteasome association which triggers gate opening, and supports translocation of unfolded substrates. The sequence is that of Proteasome-activating nucleotidase from Thermococcus onnurineus (strain NA1).